The primary structure comprises 74 residues: Kappa-stichotoxin-Hmg1a (74 aa).

Residues 1–22 (MKSQMIAAVLLIAFCLCVVVTA) form the signal peptide. A propeptide spanning residues 23 to 39 (RMELQDVEDMENGFQKR) is cleaved from the precursor. The ShKT domain occupies 42–74 (CKDLIPVSECTDIRCRTSMKYRLNLCRKTCGSC). 3 disulfide bridges follow: cysteine 42–cysteine 74, cysteine 51–cysteine 67, and cysteine 56–cysteine 71.

This sequence belongs to the sea anemone type 1 potassium channel toxin family. Type 1a subfamily.

The protein localises to the secreted. It is found in the nematocyst. Its function is as follows. Potently blocks the voltage-gated potassium channel Kv1.1/KCNA1 (Ki=75 pM), KcsA (Ki~1 nM) and moderately blocks Kv1.2/KCNA2 (Ki=2.5 nM) and Kv1.3/KCNA3 (Ki=3.1 nM). Also facilitates acetylcholine release at the avian neuromuscular junction. Blockade and dissociation rate are sensitive to voltage. The protein is Kappa-stichotoxin-Hmg1a of Heteractis magnifica (Magnificent sea anemone).